The chain runs to 178 residues: Adenine phosphoribosyltransferase (178 aa).

The protein belongs to the purine/pyrimidine phosphoribosyltransferase family. As to quaternary structure, homodimer.

It localises to the cytoplasm. It catalyses the reaction AMP + diphosphate = 5-phospho-alpha-D-ribose 1-diphosphate + adenine. It participates in purine metabolism; AMP biosynthesis via salvage pathway; AMP from adenine: step 1/1. In terms of biological role, catalyzes a salvage reaction resulting in the formation of AMP, that is energically less costly than de novo synthesis. In Bacteroides fragilis (strain ATCC 25285 / DSM 2151 / CCUG 4856 / JCM 11019 / LMG 10263 / NCTC 9343 / Onslow / VPI 2553 / EN-2), this protein is Adenine phosphoribosyltransferase.